A 433-amino-acid chain; its full sequence is Enolase (433 aa).

Q167 provides a ligand contact to (2R)-2-phosphoglycerate. The active-site Proton donor is E209. Mg(2+)-binding residues include D246, E291, and D318. Residues K343, R372, S373, and K394 each contribute to the (2R)-2-phosphoglycerate site. Residue K343 is the Proton acceptor of the active site.

This sequence belongs to the enolase family. Component of the RNA degradosome, a multiprotein complex involved in RNA processing and mRNA degradation. Mg(2+) serves as cofactor.

Its subcellular location is the cytoplasm. It localises to the secreted. It is found in the cell surface. The catalysed reaction is (2R)-2-phosphoglycerate = phosphoenolpyruvate + H2O. The protein operates within carbohydrate degradation; glycolysis; pyruvate from D-glyceraldehyde 3-phosphate: step 4/5. Functionally, catalyzes the reversible conversion of 2-phosphoglycerate (2-PG) into phosphoenolpyruvate (PEP). It is essential for the degradation of carbohydrates via glycolysis. The polypeptide is Enolase (Haemophilus ducreyi (strain 35000HP / ATCC 700724)).